We begin with the raw amino-acid sequence, 493 residues long: UDP-glucose 6-dehydrogenase (493 aa).

Residues 11–16 (GAGYVG), Asp36, Arg41, and 89–93 (VNTPT) each bind NAD(+). Residues 88–110 (SVNTPTKTYGMGKGRAADLKYIE) are disordered. Lys107 is subject to N6-acetyllysine. Residues 129-135 (KSTVPVR) form an allosteric switch region region. An NAD(+)-binding site is contributed by 130–132 (STV). The active-site Proton donor/acceptor is Glu161. Substrate-binding positions include 161-165 (EFLAE), 220-224 (KLAAN), Arg260, and 267-273 (KASVGFG). Glu165 provides a ligand contact to NAD(+). Lys220 (proton donor/acceptor) is an active-site residue. The active-site Nucleophile is Cys276. 276–279 (CFQK) serves as a coordination point for NAD(+). Residues 321–325 (SLFNT) are important for formation of active hexamer structure. 338–339 (FK) is a binding site for substrate. Arg346 provides a ligand contact to NAD(+). Arg442 contacts substrate. Residues 466-493 (VSSKRIPYTPGEIPKFSLQDPPNKKPKV) are disordered. Position 474 is a phosphothreonine (Thr474).

Belongs to the UDP-glucose/GDP-mannose dehydrogenase family. In terms of assembly, homohexamer.

It catalyses the reaction UDP-alpha-D-glucose + 2 NAD(+) + H2O = UDP-alpha-D-glucuronate + 2 NADH + 3 H(+). It participates in nucleotide-sugar biosynthesis; UDP-alpha-D-glucuronate biosynthesis; UDP-alpha-D-glucuronate from UDP-alpha-D-glucose: step 1/1. Its activity is regulated as follows. UDP-alpha-D-xylose (UDX) acts as a feedback inhibitor. It binds at the same site as the substrate, but functions as allosteric inhibitor by triggering a conformation change that disrupts the active hexameric ring structure and gives rise to an inactive, horseshoe-shaped hexamer. In terms of biological role, catalyzes the formation of UDP-alpha-D-glucuronate, a constituent of complex glycosaminoglycans. Required for the biosynthesis of chondroitin sulfate and heparan sulfate. Required for embryonic development via its role in the biosynthesis of glycosaminoglycans. Required for proper brain and neuronal development. The chain is UDP-glucose 6-dehydrogenase (Ugdh) from Mus musculus (Mouse).